A 117-amino-acid chain; its full sequence is Large ribosomal subunit protein bL20 (117 aa).

It belongs to the bacterial ribosomal protein bL20 family.

Its function is as follows. Binds directly to 23S ribosomal RNA and is necessary for the in vitro assembly process of the 50S ribosomal subunit. It is not involved in the protein synthesizing functions of that subunit. This is Large ribosomal subunit protein bL20 from Trichlorobacter lovleyi (strain ATCC BAA-1151 / DSM 17278 / SZ) (Geobacter lovleyi).